A 370-amino-acid chain; its full sequence is ABSCISIC ACID-INSENSITIVE 5-like protein 8 (370 aa).

3 positions are modified to phosphoserine: serine 25, serine 44, and serine 69. A disordered region spans residues 56–77; the sequence is SAEETQEGSQRQGSTTLPPTLS. Residues 62 to 77 show a composition bias toward polar residues; it reads EGSQRQGSTTLPPTLS. Threonine 111 carries the post-translational modification Phosphothreonine. Residues 260–278 show a composition bias toward polar residues; it reads ESSLLSPSPYISNGSTSTR. Residues 260–281 form a disordered region; it reads ESSLLSPSPYISNGSTSTRGGK. Positions 293–356 constitute a bZIP domain; that stretch reads VDKKLRRKIK…MEPGMISLHE (64 aa). The basic motif stretch occupies residues 295 to 314; sequence KKLRRKIKNRESAARSRARK. The segment at 328–342 is leucine-zipper; that stretch reads LKKDYEELLKQHVEL. Positions 349-370 are disordered; the sequence is PGMISLHERPERKLRRTKSDIK. Over residues 354-370 the composition is skewed to basic and acidic residues; the sequence is LHERPERKLRRTKSDIK.

The protein belongs to the bZIP family. ABI5 subfamily. As to quaternary structure, DNA-binding heterodimer.

The protein localises to the nucleus. Its function is as follows. Could participate in abscisic acid-regulated gene expression. This is ABSCISIC ACID-INSENSITIVE 5-like protein 8 (BZIP15) from Arabidopsis thaliana (Mouse-ear cress).